A 384-amino-acid chain; its full sequence is Toluene efflux pump periplasmic linker protein TtgA (384 aa).

A signal peptide spans 1–22 (MQFKPAVTALVSAVALATLLSG). Cys-23 carries N-palmitoyl cysteine lipidation. The S-diacylglycerol cysteine moiety is linked to residue Cys-23. The stretch at 115–155 (LAERYKQLIDEQAVSKQEYDDANAKRLQAEASLKSAQIDLR) forms a coiled coil. The segment at 362-384 (ATNVKKPAGPDQANAAKADAKAE) is disordered. The span at 368–378 (PAGPDQANAAK) shows a compositional bias: low complexity.

It belongs to the membrane fusion protein (MFP) (TC 8.A.1) family.

It is found in the cell inner membrane. In terms of biological role, the periplasmic linker protein component of a constitutive organic solvent efflux system. Involved in export of toluene, styrene, m-xylene, propylbenzene and ethylbenzene. Also exports AMP and the antibiotics carbenicillin, nalidixic acid, chloramphenicol and tetracycline. In Pseudomonas putida (strain DOT-T1E), this protein is Toluene efflux pump periplasmic linker protein TtgA (ttgA).